Consider the following 149-residue polypeptide: FAD synthase (149 aa).

ATP-binding positions include Val-9–Phe-10, His-14–His-17, Asp-93, and Tyr-120.

Belongs to the archaeal FAD synthase family. As to quaternary structure, homodimer. A divalent metal cation is required as a cofactor.

It catalyses the reaction FMN + ATP + H(+) = FAD + diphosphate. It functions in the pathway cofactor biosynthesis; FAD biosynthesis; FAD from FMN: step 1/1. Its function is as follows. Catalyzes the transfer of the AMP portion of ATP to flavin mononucleotide (FMN) to produce flavin adenine dinucleotide (FAD) coenzyme. The protein is FAD synthase of Aciduliprofundum boonei (strain DSM 19572 / T469).